A 180-amino-acid polypeptide reads, in one-letter code: CASP-like protein 2A3 (180 aa).

The Cytoplasmic portion of the chain corresponds to 1–13 (MELIYGSTMRKKW). A helical transmembrane segment spans residues 14-34 (IEPALRFLPVGLCISALALML). The Extracellular segment spans residues 35-55 (KSKEGNENGILEYKHVGAFRY). A helical membrane pass occupies residues 56 to 76 (LAYANGICAAYSVLSTFNSVV). The Cytoplasmic segment spans residues 77–85 (PRSCSLSRA). A helical membrane pass occupies residues 86-106 (WFVFVFDQAFTYLMLGAGAVV). Over 107–135 (TEVLYLAYKGDEKITWFEICPYYGRFCNR) the chain is Extracellular. A helical membrane pass occupies residues 136 to 156 (VAASLVISFLALLCFIPLSLI). Residues 157-180 (SAYRVFSKYDPPSLCKKDQITSQS) lie on the Cytoplasmic side of the membrane.

The protein belongs to the Casparian strip membrane proteins (CASP) family. As to quaternary structure, homodimer and heterodimers.

It is found in the cell membrane. This chain is CASP-like protein 2A3, found in Picea sitchensis (Sitka spruce).